Here is an 85-residue protein sequence, read N- to C-terminus: Large ribosomal subunit protein bL27 (85 aa).

The span at 1–10 (MAQKKGGGST) shows a compositional bias: gly residues. The disordered stretch occupies residues 1–21 (MAQKKGGGSTRNGRDSQPKML).

This sequence belongs to the bacterial ribosomal protein bL27 family.

This is Large ribosomal subunit protein bL27 from Leptothrix cholodnii (strain ATCC 51168 / LMG 8142 / SP-6) (Leptothrix discophora (strain SP-6)).